A 285-amino-acid polypeptide reads, in one-letter code: GTP-binding protein 8 (285 aa).

The region spanning 110 to 283 (RQPEVCFIGR…KCFIADITGS (174 aa)) is the EngB-type G domain. GTP contacts are provided by residues 118-125 (GRSNVGKS), 147-151 (GHTKK), 165-168 (DMPG), 227-230 (TKID), and 262-264 (ISA). Mg(2+)-binding residues include serine 125 and threonine 149.

This sequence belongs to the TRAFAC class TrmE-Era-EngA-EngB-Septin-like GTPase superfamily. EngB GTPase family. Mg(2+) is required as a cofactor.

The polypeptide is GTP-binding protein 8 (Gtpbp8) (Rattus norvegicus (Rat)).